We begin with the raw amino-acid sequence, 265 residues long: Reduced viability upon starvation protein 161 (265 aa).

The BAR domain maps to 15-239; sequence HSVIIKNVDK…LDQQSRDDYA (225 aa). Positions 126-193 form a coiled coil; the sequence is YFKEIEEAIK…NQLKTELPQL (68 aa).

The protein localises to the cytoplasm. It is found in the cytoskeleton. In terms of biological role, component of a cytoskeletal structure that is required for the formation of endocytic vesicles at the plasma membrane level. The protein is Reduced viability upon starvation protein 161 (RVS161) of Saccharomyces cerevisiae (strain ATCC 204508 / S288c) (Baker's yeast).